A 493-amino-acid polypeptide reads, in one-letter code: Cytochrome P450 2E1 (493 aa).

Residue 298–303 (FAGTET) participates in substrate binding. Cys437 is a heme binding site.

Belongs to the cytochrome P450 family. As to quaternary structure, interacts with chaperones HSP70 and HSP90; this interaction is required for initial targeting to mitochondria. Requires heme as cofactor.

The protein resides in the endoplasmic reticulum membrane. The protein localises to the microsome membrane. It is found in the mitochondrion inner membrane. It catalyses the reaction an organic molecule + reduced [NADPH--hemoprotein reductase] + O2 = an alcohol + oxidized [NADPH--hemoprotein reductase] + H2O + H(+). The enzyme catalyses (5Z,8Z,11Z)-eicosatrienoate + reduced [NADPH--hemoprotein reductase] + O2 = 19-hydroxy-(5Z,8Z,11Z)-eicosatrienoate + oxidized [NADPH--hemoprotein reductase] + H2O + H(+). It carries out the reaction (5Z,8Z,11Z,14Z,17Z)-eicosapentaenoate + reduced [NADPH--hemoprotein reductase] + O2 = 19-hydroxy-(5Z,8Z,11Z,14Z,17Z)-eicosapentaenoate + oxidized [NADPH--hemoprotein reductase] + H2O + H(+). The catalysed reaction is (4Z,7Z,10Z,13Z,16Z,19Z)-docosahexaenoate + reduced [NADPH--hemoprotein reductase] + O2 = 21-hydroxy-(4Z,7Z,10Z,13Z,16Z,19Z)-docosahexaenoate + oxidized [NADPH--hemoprotein reductase] + H2O + H(+). It catalyses the reaction dodecanoate + reduced [NADPH--hemoprotein reductase] + O2 = 11-hydroxydodecanoate + oxidized [NADPH--hemoprotein reductase] + H2O + H(+). The enzyme catalyses tetradecanoate + reduced [NADPH--hemoprotein reductase] + O2 = 13-hydroxytetradecanoate + oxidized [NADPH--hemoprotein reductase] + H2O + H(+). It carries out the reaction 4-nitrophenol + NADPH + O2 + H(+) = 4-nitrocatechol + NADP(+) + H2O. Its pathway is lipid metabolism; fatty acid metabolism. The omega-1 hydroxylase activity is stimulated by cytochrome b5. A cytochrome P450 monooxygenase involved in the metabolism of fatty acids. Mechanistically, uses molecular oxygen inserting one oxygen atom into a substrate, and reducing the second into a water molecule, with two electrons provided by NADPH via cytochrome P450 reductase (NADPH--hemoprotein reductase). Catalyzes the hydroxylation of carbon-hydrogen bonds. Hydroxylates fatty acids specifically at the omega-1 position displaying the highest catalytic activity for saturated fatty acids. May be involved in the oxidative metabolism of xenobiotics. The sequence is that of Cytochrome P450 2E1 from Homo sapiens (Human).